Here is a 475-residue protein sequence, read N- to C-terminus: Ribulose bisphosphate carboxylase large chain (475 aa).

Residues 1 to 2 (MS) constitute a propeptide that is removed on maturation. Pro3 bears the N-acetylproline mark. Lys14 bears the N6,N6,N6-trimethyllysine mark. Substrate is bound by residues Asn123 and Thr173. The active-site Proton acceptor is Lys175. Residue Lys177 coordinates substrate. Positions 201, 203, and 204 each coordinate Mg(2+). Residue Lys201 is modified to N6-carboxylysine. His294 functions as the Proton acceptor in the catalytic mechanism. 3 residues coordinate substrate: Arg295, His327, and Ser379.

This sequence belongs to the RuBisCO large chain family. Type I subfamily. In terms of assembly, heterohexadecamer of 8 large chains and 8 small chains. Mg(2+) serves as cofactor.

It is found in the plastid. The protein resides in the chloroplast. The catalysed reaction is 2 (2R)-3-phosphoglycerate + 2 H(+) = D-ribulose 1,5-bisphosphate + CO2 + H2O. It catalyses the reaction D-ribulose 1,5-bisphosphate + O2 = 2-phosphoglycolate + (2R)-3-phosphoglycerate + 2 H(+). Functionally, ruBisCO catalyzes two reactions: the carboxylation of D-ribulose 1,5-bisphosphate, the primary event in carbon dioxide fixation, as well as the oxidative fragmentation of the pentose substrate in the photorespiration process. Both reactions occur simultaneously and in competition at the same active site. This is Ribulose bisphosphate carboxylase large chain from Coleochaete orbicularis (Charophycean green alga).